A 66-amino-acid chain; its full sequence is Cytochrome c oxidase polypeptide VIII, mitochondrial (66 aa).

Residues 1-17 constitute a mitochondrion transit peptide; sequence MLRYSLQARSALRGVRF. Topologically, residues 18–38 are mitochondrial matrix; it reads SSSHSAPKPGSTIPFYINKKP. Residues 39 to 59 traverse the membrane as a helical segment; it reads LPTLLYFGTFGVIFSIPFIVV. The Mitochondrial intermembrane portion of the chain corresponds to 60 to 66; sequence KYHNRNL.

This sequence belongs to the cytochrome c oxidase VIIc family. Component of the cytochrome c oxidase (complex IV, CIV), a multisubunit enzyme composed of a catalytic core of 3 subunits and several supernumerary subunits. The complex exists as a monomer or a dimer and forms supercomplexes (SCs) in the inner mitochondrial membrane with ubiquinol-cytochrome c oxidoreductase (cytochrome b-c1 complex, complex III, CIII).

It is found in the mitochondrion inner membrane. It participates in energy metabolism; oxidative phosphorylation. Functionally, component of the cytochrome c oxidase, the last enzyme in the mitochondrial electron transport chain which drives oxidative phosphorylation. The respiratory chain contains 3 multisubunit complexes succinate dehydrogenase (complex II, CII), ubiquinol-cytochrome c oxidoreductase (cytochrome b-c1 complex, complex III, CIII) and cytochrome c oxidase (complex IV, CIV), that cooperate to transfer electrons derived from NADH and succinate to molecular oxygen, creating an electrochemical gradient over the inner membrane that drives transmembrane transport and the ATP synthase. Cytochrome c oxidase is the component of the respiratory chain that catalyzes the reduction of oxygen to water. Electrons originating from reduced cytochrome c in the intermembrane space (IMS) are transferred via the dinuclear copper A center (CU(A)) of subunit 2 and heme A of subunit 1 to the active site in subunit 1, a binuclear center (BNC) formed by heme A3 and copper B (CU(B)). The BNC reduces molecular oxygen to 2 water molecules using 4 electrons from cytochrome c in the IMS and 4 protons from the mitochondrial matrix. The sequence is that of Cytochrome c oxidase polypeptide VIII, mitochondrial (cox8) from Schizosaccharomyces pombe (strain 972 / ATCC 24843) (Fission yeast).